The following is a 615-amino-acid chain: MPPFFAEFTESVFRHFRRNEPDEENSAICSEKMSSYGAIGVDDNDTDPLLDDEPPRRLPPAGGVPIGRRRAISASQIGSIPSQSAATRQPYLFTGGLGLRDESLLSLHSEDDLHREHNNALRYRLYNRLDPGGEHLTMPDHVLPPNLFSILPFEELKDVSGKQGSIVTIFSIWNTMMGTSLLAMPWALQQAGLVLGIIIMLSMAAICFYTAYIVIESPKRLQDLSVDPLLAEFSDVCKSLFGRIGEYCAVVFSVCVLIGGVIVYWVLMSNFLYYTGAVVYESMQPNSTTIPVMENKTFTCDVYCPEQTSQWTIPQWEKQLYDAVSEMEGGETGDDSWSFDKFWTLRGTVPIYLAFALFPLMNFKSPTFFTKFNVLGTISVMYLLMFVFSKLLECGVNMDFSNPKSIHYVQLANMHFPALSGTLTLSYFIHNAVLTILRNQKHPENNARDLSIGYCLVAFCYVFIGFTFFAAFPVQRSCISDNFLNNFGAGDVLSSTARLFLLFQMITVLPLLMFLVRSQLFYAIFGQTWPGAIRVIILNVLLIAVAVGFATFYPNVGSILRYVGSISGLVYVFALPAMVYIKQSEAAGTLTPMKKYAHYGIIVIGVANLIAQFVI.

Residues 1–165 lie on the Cytoplasmic side of the membrane; it reads MPPFFAEFTE…LKDVSGKQGS (165 aa). A disordered region spans residues 41–65; it reads VDDNDTDPLLDDEPPRRLPPAGGVP. Residues 42 to 52 show a composition bias toward acidic residues; it reads DDNDTDPLLDD. The helical transmembrane segment at 166-186 threads the bilayer; sequence IVTIFSIWNTMMGTSLLAMPW. The important for arginine binding and amino acid transport stretch occupies residues 175–180; sequence TMMGTS. Residues 187-192 lie on the Lumenal side of the membrane; sequence ALQQAG. A helical transmembrane segment spans residues 193-213; that stretch reads LVLGIIIMLSMAAICFYTAYI. The Cytoplasmic segment spans residues 214–246; it reads VIESPKRLQDLSVDPLLAEFSDVCKSLFGRIGE. A helical transmembrane segment spans residues 247-273; the sequence is YCAVVFSVCVLIGGVIVYWVLMSNFLY. The Lumenal portion of the chain corresponds to 274 to 341; the sequence is YTGAVVYESM…TGDDSWSFDK (68 aa). Asn286 and Asn295 each carry an N-linked (GlcNAc...) asparagine glycan. Cys304 and Cys478 are joined by a disulfide. Residues 342–358 traverse the membrane as a helical segment; that stretch reads FWTLRGTVPIYLAFALF. Over 359–367 the chain is Cytoplasmic; that stretch reads PLMNFKSPT. A helical transmembrane segment spans residues 368 to 392; the sequence is FFTKFNVLGTISVMYLLMFVFSKLL. Over 393–413 the chain is Lumenal; sequence ECGVNMDFSNPKSIHYVQLAN. Residues 414-434 traverse the membrane as a helical segment; sequence MHFPALSGTLTLSYFIHNAVL. The Cytoplasmic portion of the chain corresponds to 435–451; it reads TILRNQKHPENNARDLS. The helical transmembrane segment at 452–472 threads the bilayer; the sequence is IGYCLVAFCYVFIGFTFFAAF. Over 473-491 the chain is Lumenal; it reads PVQRSCISDNFLNNFGAGD. Residues 492–512 traverse the membrane as a helical segment; the sequence is VLSSTARLFLLFQMITVLPLL. Residues 513–533 lie on the Cytoplasmic side of the membrane; it reads MFLVRSQLFYAIFGQTWPGAI. The helical transmembrane segment at 534–554 threads the bilayer; that stretch reads RVIILNVLLIAVAVGFATFYP. Residues 555–561 lie on the Lumenal side of the membrane; it reads NVGSILR. The chain crosses the membrane as a helical span at residues 562–582; that stretch reads YVGSISGLVYVFALPAMVYIK. Residues 583–594 lie on the Cytoplasmic side of the membrane; the sequence is QSEAAGTLTPMK. A helical membrane pass occupies residues 595–615; sequence KYAHYGIIVIGVANLIAQFVI.

The protein belongs to the amino acid/polyamine transporter 2 family. SLC38A9 subfamily.

The protein resides in the lysosome membrane. It is found in the late endosome membrane. Amino acid transport is sodium-dependent. Transport of leucine, tyrosine and phenylalanine is increased by arginine binding. Lysosomal amino acid transporter involved in the activation of mTORC1 in response to amino acid levels. Probably acts as an amino acid sensor of the Rag GTPases and Ragulator complexes, 2 complexes involved in amino acid sensing and activation of mTORC1, a signaling complex promoting cell growth in response to growth factors, energy levels, and amino acids. This is Sodium-coupled neutral amino acid transporter 9 homolog from Caenorhabditis elegans.